A 135-amino-acid polypeptide reads, in one-letter code: Histone H2A (135 aa).

It belongs to the histone H2A family. In terms of assembly, the nucleosome is a histone octamer containing two molecules each of H2A, H2B, H3 and H4 assembled in one H3-H4 heterotetramer and two H2A-H2B heterodimers. The octamer wraps approximately 147 bp of DNA.

The protein localises to the nucleus. It localises to the chromosome. Core component of nucleosome. Nucleosomes wrap and compact DNA into chromatin, limiting DNA accessibility to the cellular machineries which require DNA as a template. Histones thereby play a central role in transcription regulation, DNA repair, DNA replication and chromosomal stability. DNA accessibility is regulated via a complex set of post-translational modifications of histones, also called histone code, and nucleosome remodeling. The chain is Histone H2A from Trypanosoma cruzi.